The primary structure comprises 277 residues: 4-hydroxy-tetrahydrodipicolinate reductase (277 aa).

NAD(+)-binding positions include glycine 11–methionine 16 and glycine 110–threonine 112. Residue histidine 166 is the Proton donor/acceptor of the active site. Histidine 167 lines the (S)-2,3,4,5-tetrahydrodipicolinate pocket. Residue lysine 170 is the Proton donor of the active site. (S)-2,3,4,5-tetrahydrodipicolinate is bound at residue glycine 176–threonine 177.

The protein belongs to the DapB family.

It is found in the cytoplasm. It catalyses the reaction (S)-2,3,4,5-tetrahydrodipicolinate + NAD(+) + H2O = (2S,4S)-4-hydroxy-2,3,4,5-tetrahydrodipicolinate + NADH + H(+). The enzyme catalyses (S)-2,3,4,5-tetrahydrodipicolinate + NADP(+) + H2O = (2S,4S)-4-hydroxy-2,3,4,5-tetrahydrodipicolinate + NADPH + H(+). It functions in the pathway amino-acid biosynthesis; L-lysine biosynthesis via DAP pathway; (S)-tetrahydrodipicolinate from L-aspartate: step 4/4. Functionally, catalyzes the conversion of 4-hydroxy-tetrahydrodipicolinate (HTPA) to tetrahydrodipicolinate. The protein is 4-hydroxy-tetrahydrodipicolinate reductase of Parasynechococcus marenigrum (strain WH8102).